A 112-amino-acid chain; its full sequence is Nitrogen regulatory protein P-II 1 (112 aa).

Position 51 is an O-UMP-tyrosine (Tyr-51).

The protein belongs to the P(II) protein family. In terms of assembly, homotrimer. In terms of processing, uridylylated/deuridylylated by GlnD.

Its function is as follows. P-II indirectly controls the transcription of the glutamine synthetase gene (GlnA). P-II prevents NR-II-catalyzed conversion of NR-I to NR-I-phosphate, the transcriptional activator of GlnA. When P-II is uridylylated to P-II-UMP, these events are reversed. When the ratio of Gln to 2-ketoglutarate decreases, P-II is uridylylated to P-II-UMP, which causes the deadenylation of glutamine synthetase by GlnE, so activating the enzyme. The sequence is that of Nitrogen regulatory protein P-II 1 (glnB) from Escherichia coli O157:H7.